Here is an 89-residue protein sequence, read N- to C-terminus: Small ribosomal subunit protein uS15 (89 aa).

A compositionally biased stretch (basic and acidic residues) spans 1 to 21 (MALTTEEKKQVLSEYGLHETD). The interval 1 to 24 (MALTTEEKKQVLSEYGLHETDTGS) is disordered.

This sequence belongs to the universal ribosomal protein uS15 family. In terms of assembly, part of the 30S ribosomal subunit. Forms a bridge to the 50S subunit in the 70S ribosome, contacting the 23S rRNA.

One of the primary rRNA binding proteins, it binds directly to 16S rRNA where it helps nucleate assembly of the platform of the 30S subunit by binding and bridging several RNA helices of the 16S rRNA. Functionally, forms an intersubunit bridge (bridge B4) with the 23S rRNA of the 50S subunit in the ribosome. This chain is Small ribosomal subunit protein uS15, found in Rhodococcus jostii (strain RHA1).